A 600-amino-acid polypeptide reads, in one-letter code: Polypeptide N-acetylgalactosaminyltransferase (600 aa).

At 1 to 7 the chain is on the cytoplasmic side; that stretch reads MVRRKLR. Residues 8–28 traverse the membrane as a helical; Signal-anchor for type II membrane protein segment; the sequence is LLVILAGIWLVGIVVYLFKGD. The Lumenal portion of the chain corresponds to 29–600; the sequence is DQSEFEKRVI…KWTFSLSKNR (572 aa). Disulfide bonds link Cys-154-Cys-382, Cys-373-Cys-451, Cys-484-Cys-501, Cys-524-Cys-541, and Cys-567-Cys-583. Positions 163 to 268 are catalytic subdomain A; that stretch reads LPDTSVIITF…EKWLEPLLDR (106 aa). Positions 171, 204, and 229 each coordinate substrate. Asp-252 contributes to the Mn(2+) binding site. Ser-253 contacts substrate. His-254 is a binding site for Mn(2+). Residues 328–390 form a catalytic subdomain B region; it reads PIRTPMIAGG…PCSRVGHVFR (63 aa). Residue Trp-359 participates in substrate binding. A Mn(2+)-binding site is contributed by His-387. Substrate-binding residues include Arg-390, His-393, and Tyr-395. A Ricin B-type lectin domain is found at 466–595; that stretch reads KIPSVQDIAF…SSYTQKWTFS (130 aa).

This sequence belongs to the glycosyltransferase 2 family. GalNAc-T subfamily. Mn(2+) serves as cofactor. O-glycosylated.

It localises to the golgi apparatus membrane. The enzyme catalyses L-seryl-[protein] + UDP-N-acetyl-alpha-D-galactosamine = a 3-O-[N-acetyl-alpha-D-galactosaminyl]-L-seryl-[protein] + UDP + H(+). It catalyses the reaction L-threonyl-[protein] + UDP-N-acetyl-alpha-D-galactosamine = a 3-O-[N-acetyl-alpha-D-galactosaminyl]-L-threonyl-[protein] + UDP + H(+). It participates in protein modification; protein glycosylation. With respect to regulation, no change in activity by addition of up to 10% methanol or glycerol, or 5% acetonitrile. 40% reduction in activity by 10% acetonitrile or by lyophilization. Activity requires divalent cations, the best being Mn(2+) (10-20 mM), followed by Co(2+), Mg(2+) and Ca(2+). Loss of activity with Cu(2+) or in the presence of EDTA. Inhibited by UDP, but not by UMP, UTP, ADP or GDP nucleotides. No inhibition by galactose, N-acetylglucosamine or N-acetylgalactosamine sugars. In terms of biological role, catalyzes the initial reaction in O-linked oligosaccharide biosynthesis, the transfer of an N-acetyl-D-galactosamine residue to a serine or threonine residue on the protein receptor. Has a broad substrate specificity. Acceptor peptides include Muc2, Muc5Ac, Muc1a and Muc1a', with Muc2 as the best acceptor. Acts on non-glycosylated and mono- or multi-glycosylated peptide substrates. Transfers preferably to threonine rather than serine residue. Thr-15 is the most preferred site of glycosylation in Muc2 peptide PTTTPITTTTTVTPTPTPTGTQTK having proline residues at position -1, and at positions +1 and +3, where the number represents the distance from the C-terminal and N-terminal hydroxyl amino acid, respectively. Transfer of the N-acetyl-D-galactosamine (GalNAc) is optimal with proline residues at positions -3, -1, +1 and +3, but other amino acids are tolerated, although some, such as phenylalanine, isoleucine or leucine at -1, or lysine at +3 prevent the transfer completely. Second GalNAc is transferred to Muc2 Thr-2 or Thr-13, both of which have two proline residues nearby. Up to nine sites can be glycosylated within Muc2, but eight are used simultaneously since Thr-19 and Thr-21 are not detected to be glycosylated at the same time. Glycosylation is not detected of a potential site, which is next to an already glycosylated site, but only one amino acid is needed in between two glycosylation sites. Ser-5 is the preferred glycosylation site in Muc5Ac peptide GTTPSPVPTTSTTSAP into which up to four GalNAcs can be attached. Only the threonine residues are detected as pontential glycosylation sites in Muc1a APPAHGVTSAPDTRPAPGC and Muc1a' AHGVTSAPDTR peptides. Transferase activity is restricted to UDP-GalNAc as a donor, and none of the nucleotide sugars UDP-Gal, UDP-GlcNAc, GDP-fucose, UDP-xylose, UDP-glucuronic acid or CMP-neuraminic acid are utilized as donors. The polypeptide is Polypeptide N-acetylgalactosaminyltransferase (Biomphalaria glabrata (Bloodfluke planorb)).